The following is a 629-amino-acid chain: Acetylcholinesterase (629 aa).

Positions 1-38 are cleaved as a signal peptide; sequence MGQLSILCLFVTVCASVCGYSWPSDETTTKPSQFKDFH. Cysteine 103 and cysteine 130 are oxidised to a cystine. N-linked (GlcNAc...) asparagine glycosylation occurs at asparagine 125. The active-site Acyl-ester intermediate is the serine 253. Cysteines 307 and 322 form a disulfide. Asparagine 308 carries N-linked (GlcNAc...) asparagine glycosylation. Glutamate 382 serves as the catalytic Charge relay system. Residue asparagine 418 is glycosylated (N-linked (GlcNAc...) asparagine). A disulfide bridge connects residues cysteine 458 and cysteine 574. The active-site Charge relay system is histidine 496. A glycan (N-linked (GlcNAc...) asparagine) is linked at asparagine 509. Residue serine 605 is the site of GPI-anchor amidated serine attachment. Residues 606–629 constitute a propeptide, removed in mature form; sequence SSNELLPPSTSLVLIWIMTLLNAL.

This sequence belongs to the type-B carboxylesterase/lipase family. In terms of assembly, homodimer; disulfide-linked. Post-translationally, the N-terminus is blocked.

The protein resides in the synapse. The protein localises to the cell membrane. It carries out the reaction acetylcholine + H2O = choline + acetate + H(+). Rapidly hydrolyzes choline released into the synapse. In Leptinotarsa decemlineata (Colorado potato beetle), this protein is Acetylcholinesterase.